A 556-amino-acid polypeptide reads, in one-letter code: HIRA-interacting protein 3 (556 aa).

A Phosphoserine modification is found at Ser27. Residues 64–77 (DEAASREDKLDLTK) are compositionally biased toward basic and acidic residues. A disordered region spans residues 64-426 (DEAASREDKL…GRRGEDHPAV (363 aa)). Residue Thr84 is modified to Phosphothreonine. Phosphoserine is present on residues Ser87, Ser98, Ser100, Ser125, Ser142, Ser143, Ser159, and Ser160. Low complexity predominate over residues 99-108 (ESESGSEASS). Positions 126 to 158 (PAKEENPRRASKAVEESSDEERQRDLPAQRGEE) are enriched in basic and acidic residues. The segment covering 168–177 (KGKTRKKPVV) has biased composition (basic residues). A phosphoserine mark is found at Ser196, Ser199, Ser223, and Ser227. Basic and acidic residues predominate over residues 209-224 (KKVEGNKGTKSLKESE). Residues 240 to 254 (EEEVEEEEKEEDEEK) are compositionally biased toward acidic residues. The span at 260–269 (RTRSNGRRKS) shows a compositional bias: basic residues. Residues Ser289 and Ser291 each carry the phosphoserine modification. Basic and acidic residues predominate over residues 304–322 (DSGRDREPPVQRKSEDRTQ). 4 positions are modified to phosphoserine: Ser330, Ser332, Ser333, and Ser357. Position 358 is a phosphothreonine (Thr358). Phosphoserine is present on residues Ser359, Ser363, Ser370, and Ser372. The segment covering 385-396 (RSSKKSSRKGRT) has biased composition (basic residues). Positions 403–527 (SDGSPEAKGG…APPGELYRRT (125 aa)) are interaction with the histone H2A-H2B complex. Phosphothreonine is present on Thr471. Positions 502 to 556 (SGRPRRRTAWNPLGEAAPPGELYRRTLDSDEERPRPAPPDWSHMRGIISSDGESN) are disordered. Basic and acidic residues predominate over residues 523–536 (LYRRTLDSDEERPR). A phosphoserine mark is found at Ser530, Ser550, Ser551, and Ser555.

As to quaternary structure, interacts (via C-terminus) with histone H2A-H2B dimers; the interaction is direct. Interacts with HIRA. Interacts with CK2. In terms of processing, phosphorylated by CK2. In terms of tissue distribution, widely expressed. Isoform 1 is predominant in skeletal muscle. Isoform 2 is predominant in liver and heart.

It localises to the nucleus. Histone chaperone that carries a H2A-H2B histone complex and facilitates its deposition onto chromatin. This Homo sapiens (Human) protein is HIRA-interacting protein 3 (HIRIP3).